The primary structure comprises 366 residues: Chorismate synthase (366 aa).

Arg-48 provides a ligand contact to NADP(+). Residues 125–127, 238–239, Gly-278, 293–297, and Arg-319 contribute to the FMN site; these read RSS, NA, and KPTSS.

Belongs to the chorismate synthase family. Homotetramer. FMNH2 serves as cofactor.

The catalysed reaction is 5-O-(1-carboxyvinyl)-3-phosphoshikimate = chorismate + phosphate. It functions in the pathway metabolic intermediate biosynthesis; chorismate biosynthesis; chorismate from D-erythrose 4-phosphate and phosphoenolpyruvate: step 7/7. In terms of biological role, catalyzes the anti-1,4-elimination of the C-3 phosphate and the C-6 proR hydrogen from 5-enolpyruvylshikimate-3-phosphate (EPSP) to yield chorismate, which is the branch point compound that serves as the starting substrate for the three terminal pathways of aromatic amino acid biosynthesis. This reaction introduces a second double bond into the aromatic ring system. This is Chorismate synthase from Alkalilimnicola ehrlichii (strain ATCC BAA-1101 / DSM 17681 / MLHE-1).